A 449-amino-acid polypeptide reads, in one-letter code: Asparagine--tRNA ligase (449 aa).

The protein belongs to the class-II aminoacyl-tRNA synthetase family. In terms of assembly, homodimer.

It localises to the cytoplasm. It catalyses the reaction tRNA(Asn) + L-asparagine + ATP = L-asparaginyl-tRNA(Asn) + AMP + diphosphate + H(+). The protein is Asparagine--tRNA ligase of Deinococcus geothermalis (strain DSM 11300 / CIP 105573 / AG-3a).